Reading from the N-terminus, the 183-residue chain is Glutathione-regulated potassium-efflux system ancillary protein KefG (183 aa).

This sequence belongs to the NAD(P)H dehydrogenase (quinone) family. KefG subfamily. Interacts with KefB.

The protein localises to the cell inner membrane. The enzyme catalyses a quinone + NADH + H(+) = a quinol + NAD(+). The catalysed reaction is a quinone + NADPH + H(+) = a quinol + NADP(+). Its function is as follows. Regulatory subunit of a potassium efflux system that confers protection against electrophiles. Required for full activity of KefB. This chain is Glutathione-regulated potassium-efflux system ancillary protein KefG, found in Salmonella paratyphi C (strain RKS4594).